Reading from the N-terminus, the 342-residue chain is 4-hydroxy-2-oxovalerate aldolase (342 aa).

The 251-residue stretch at 7-257 (VWITEVALRD…KTGIDLYKMM (251 aa)) folds into the Pyruvate carboxyltransferase domain. 15–16 (RD) contributes to the substrate binding site. Mn(2+) is bound at residue D16. H19 functions as the Proton acceptor in the catalytic mechanism. S169 and H196 together coordinate substrate. H196 and H198 together coordinate Mn(2+). Y287 lines the substrate pocket.

This sequence belongs to the 4-hydroxy-2-oxovalerate aldolase family.

The enzyme catalyses (S)-4-hydroxy-2-oxopentanoate = acetaldehyde + pyruvate. This Geobacillus stearothermophilus (Bacillus stearothermophilus) protein is 4-hydroxy-2-oxovalerate aldolase (pheE).